Reading from the N-terminus, the 221-residue chain is GTP-binding nuclear protein Ran-2 (221 aa).

The Small GTPase Ran-type domain maps to 10 to 174; that stretch reads DYPSFKLVIV…LYLARKLAGD (165 aa). 21–28 serves as a coordination point for GTP; sequence DGGTGKTT. The segment at 40 to 48 is switch-I; it reads KKYEPTIGV. GTP-binding positions include Gly71, 125–128, and 153–155; these read NKVD and SAK. Residues 71-87 are switch-II; that stretch reads GQEKFGGLRDGYYIHGQ. Residues 202–212 are compositionally biased toward low complexity; that stretch reads ADLAAAAAQPL. The tract at residues 202–221 is disordered; the sequence is ADLAAAAAQPLPDDDDDAFE.

Belongs to the small GTPase superfamily. Ran family. Found in a nuclear export complex with RanGTP, exportin and pre-miRNA. Interacts with RanBP1a and RanBP1b. Interacts with PHRIP1. Interacts with KPNB1. Binds to PHIP1.

Its subcellular location is the nucleus. It is found in the nucleus envelope. In terms of biological role, GTP-binding protein involved in nucleocytoplasmic transport. Required for the import of protein into the nucleus and also for RNA export. Involved in chromatin condensation and control of cell cycle. This chain is GTP-binding nuclear protein Ran-2, found in Arabidopsis thaliana (Mouse-ear cress).